The primary structure comprises 201 residues: 3-isopropylmalate dehydratase small subunit (201 aa).

It belongs to the LeuD family. LeuD type 1 subfamily. As to quaternary structure, heterodimer of LeuC and LeuD.

It catalyses the reaction (2R,3S)-3-isopropylmalate = (2S)-2-isopropylmalate. The protein operates within amino-acid biosynthesis; L-leucine biosynthesis; L-leucine from 3-methyl-2-oxobutanoate: step 2/4. Functionally, catalyzes the isomerization between 2-isopropylmalate and 3-isopropylmalate, via the formation of 2-isopropylmaleate. This chain is 3-isopropylmalate dehydratase small subunit, found in Shigella flexneri serotype 5b (strain 8401).